Here is a 122-residue protein sequence, read N- to C-terminus: Large ribosomal subunit protein bL12 (122 aa).

The protein belongs to the bacterial ribosomal protein bL12 family. Homodimer. Part of the ribosomal stalk of the 50S ribosomal subunit. Forms a multimeric L10(L12)X complex, where L10 forms an elongated spine to which 2 to 4 L12 dimers bind in a sequential fashion. Binds GTP-bound translation factors.

Forms part of the ribosomal stalk which helps the ribosome interact with GTP-bound translation factors. Is thus essential for accurate translation. This is Large ribosomal subunit protein bL12 from Cronobacter sakazakii (strain ATCC BAA-894) (Enterobacter sakazakii).